Reading from the N-terminus, the 521-residue chain is Maturase K (521 aa).

It belongs to the intron maturase 2 family. MatK subfamily.

Its subcellular location is the plastid. It is found in the chloroplast. Functionally, usually encoded in the trnK tRNA gene intron. Probably assists in splicing its own and other chloroplast group II introns. The polypeptide is Maturase K (Trillium erectum (Beth root)).